The chain runs to 173 residues: NADH-ubiquinone oxidoreductase chain 6 (173 aa).

5 helical membrane-spanning segments follow: residues 1-21 (MTYLVSLFLLGLVLGLVAVAS), 24-44 (APYFAALGLVVAAGVGCGVLV), 53-73 (LVLFLIYLGGMLVVFAYSAAL), 87-107 (VLGYVVVYTVGVVLVAGLFWG), and 141-161 (GGMLIACAWVLLLTLFVVLEL).

The protein belongs to the complex I subunit 6 family.

It is found in the mitochondrion membrane. It carries out the reaction a ubiquinone + NADH + 5 H(+)(in) = a ubiquinol + NAD(+) + 4 H(+)(out). In terms of biological role, core subunit of the mitochondrial membrane respiratory chain NADH dehydrogenase (Complex I) that is believed to belong to the minimal assembly required for catalysis. Complex I functions in the transfer of electrons from NADH to the respiratory chain. The immediate electron acceptor for the enzyme is believed to be ubiquinone. This chain is NADH-ubiquinone oxidoreductase chain 6 (MT-ND6), found in Oncorhynchus mykiss (Rainbow trout).